The following is a 513-amino-acid chain: ATP synthase subunit alpha (513 aa).

An ATP-binding site is contributed by 169–176 (GDRQTGKT).

This sequence belongs to the ATPase alpha/beta chains family. As to quaternary structure, F-type ATPases have 2 components, CF(1) - the catalytic core - and CF(0) - the membrane proton channel. CF(1) has five subunits: alpha(3), beta(3), gamma(1), delta(1), epsilon(1). CF(0) has three main subunits: a(1), b(2) and c(9-12). The alpha and beta chains form an alternating ring which encloses part of the gamma chain. CF(1) is attached to CF(0) by a central stalk formed by the gamma and epsilon chains, while a peripheral stalk is formed by the delta and b chains.

It localises to the cell inner membrane. It carries out the reaction ATP + H2O + 4 H(+)(in) = ADP + phosphate + 5 H(+)(out). Produces ATP from ADP in the presence of a proton gradient across the membrane. The alpha chain is a regulatory subunit. The chain is ATP synthase subunit alpha from Vesicomyosocius okutanii subsp. Calyptogena okutanii (strain HA).